We begin with the raw amino-acid sequence, 274 residues long: Pyrogallol hydroxytransferase small subunit (274 aa).

[4Fe-4S] cluster-binding residues include cysteine 13, cysteine 16, cysteine 19, cysteine 23, cysteine 68, cysteine 71, cysteine 76, cysteine 109, cysteine 126, cysteine 129, cysteine 145, and cysteine 149.

As to quaternary structure, heterodimer of a large and a small subunit. [4Fe-4S] cluster is required as a cofactor.

It carries out the reaction 1,2,3,5-tetrahydroxybenzene + 1,2,3-trihydroxybenzene = 1,2,3,5-tetrahydroxybenzene + 1,3,5-trihydroxybenzene. Its function is as follows. Isomerization of pyrogallol to phloroglucin. This Pelobacter acidigallici protein is Pyrogallol hydroxytransferase small subunit (bthL).